The following is a 75-amino-acid chain: Acyl carrier protein (75 aa).

The region spanning 1–75 (MALFDDVKEV…GDAIKFIENV (75 aa)) is the Carrier domain. O-(pantetheine 4'-phosphoryl)serine is present on serine 36.

This sequence belongs to the acyl carrier protein (ACP) family. Post-translationally, 4'-phosphopantetheine is transferred from CoA to a specific serine of apo-ACP by AcpS. This modification is essential for activity because fatty acids are bound in thioester linkage to the sulfhydryl of the prosthetic group.

The protein localises to the cytoplasm. The protein operates within lipid metabolism; fatty acid biosynthesis. In terms of biological role, carrier of the growing fatty acid chain in fatty acid biosynthesis. This chain is Acyl carrier protein, found in Sulfurovum sp. (strain NBC37-1).